Reading from the N-terminus, the 314-residue chain is tRNA pseudouridine synthase B (314 aa).

A substrate-binding site is contributed by histidine 43. The Nucleophile role is filled by aspartate 48. Residues tyrosine 76, tyrosine 179, and leucine 200 each contribute to the substrate site.

The protein belongs to the pseudouridine synthase TruB family. Type 1 subfamily.

It carries out the reaction uridine(55) in tRNA = pseudouridine(55) in tRNA. Functionally, responsible for synthesis of pseudouridine from uracil-55 in the psi GC loop of transfer RNAs. The sequence is that of tRNA pseudouridine synthase B from Salmonella choleraesuis (strain SC-B67).